A 124-amino-acid chain; its full sequence is UPF0235 protein (124 aa).

The interval 1 to 22 (MTKKGSSNSSKQQQQQQQIIIN) is disordered.

This sequence belongs to the UPF0235 family.

This chain is UPF0235 protein, found in Dictyostelium discoideum (Social amoeba).